A 101-amino-acid polypeptide reads, in one-letter code: Trp operon repressor homolog (101 aa).

A DNA-binding region spans residues 59–82; the sequence is QREIQQNLNTSAATITRGSNMLKL.

This sequence belongs to the TrpR family. Homodimer.

The protein localises to the cytoplasm. Its function is as follows. This protein is an aporepressor. When complexed with L-tryptophan it binds the operator region of the trp operon and prevents the initiation of transcription. In Mannheimia succiniciproducens (strain KCTC 0769BP / MBEL55E), this protein is Trp operon repressor homolog.